We begin with the raw amino-acid sequence, 509 residues long: Maturase K (509 aa).

The protein belongs to the intron maturase 2 family. MatK subfamily.

It localises to the plastid. Its function is as follows. Usually encoded in the trnK tRNA gene intron. Probably assists in splicing its own and other chloroplast group II introns. In Cuscuta reflexa (Southern Asian dodder), this protein is Maturase K.